Reading from the N-terminus, the 728-residue chain is Homoaconitase, mitochondrial (728 aa).

Residues 1–24 (MVAIPRLARLSVPAWALSARGRFY) constitute a mitochondrion transit peptide. Residues cysteine 362, cysteine 422, and cysteine 425 each contribute to the [4Fe-4S] cluster site.

It belongs to the aconitase/IPM isomerase family. It depends on [4Fe-4S] cluster as a cofactor.

The protein resides in the mitochondrion. It catalyses the reaction (2R,3S)-homoisocitrate = cis-homoaconitate + H2O. It functions in the pathway amino-acid biosynthesis; L-lysine biosynthesis via AAA pathway; L-alpha-aminoadipate from 2-oxoglutarate: step 3/5. Functionally, catalyzes the reversible hydration of cis-homoaconitate to (2R,3S)-homoisocitrate, a step in the alpha-aminoadipate pathway for lysine biosynthesis. This Cryptococcus neoformans var. neoformans serotype D (strain B-3501A) (Filobasidiella neoformans) protein is Homoaconitase, mitochondrial (LYS4).